We begin with the raw amino-acid sequence, 280 residues long: Energy-coupling factor transporter ATP-binding protein EcfA1 (280 aa).

The ABC transporter domain occupies 6-241 (LRTENISFQY…SHMLQEIGLD (236 aa)). 40–47 (GQNGSGKS) contacts ATP.

The protein belongs to the ABC transporter superfamily. Energy-coupling factor EcfA family. In terms of assembly, forms a stable energy-coupling factor (ECF) transporter complex composed of 2 membrane-embedded substrate-binding proteins (S component), 2 ATP-binding proteins (A component) and 2 transmembrane proteins (T component).

It is found in the cell membrane. In terms of biological role, ATP-binding (A) component of a common energy-coupling factor (ECF) ABC-transporter complex. Unlike classic ABC transporters this ECF transporter provides the energy necessary to transport a number of different substrates. The protein is Energy-coupling factor transporter ATP-binding protein EcfA1 of Bacillus thuringiensis subsp. konkukian (strain 97-27).